The following is a 37-amino-acid chain: Cytochrome b6-f complex subunit 5 (37 aa).

A helical transmembrane segment spans residues 5–25 (LLSGIVLGLIPITLVGLFVTA).

It belongs to the PetG family. In terms of assembly, the 4 large subunits of the cytochrome b6-f complex are cytochrome b6, subunit IV (17 kDa polypeptide, PetD), cytochrome f and the Rieske protein, while the 4 small subunits are PetG, PetL, PetM and PetN. The complex functions as a dimer.

It localises to the plastid. The protein localises to the chloroplast thylakoid membrane. Its function is as follows. Component of the cytochrome b6-f complex, which mediates electron transfer between photosystem II (PSII) and photosystem I (PSI), cyclic electron flow around PSI, and state transitions. PetG is required for either the stability or assembly of the cytochrome b6-f complex. The sequence is that of Cytochrome b6-f complex subunit 5 from Welwitschia mirabilis (Tree tumbo).